A 184-amino-acid polypeptide reads, in one-letter code: Lipid A acyltransferase PagP (184 aa).

Residues 1–22 form the signal peptide; that stretch reads MNIRHGIIAMSSTMLVPLAAEA. Active-site residues include H57, D100, and S101.

Belongs to the lipid A palmitoyltransferase family. Homodimer.

It localises to the cell outer membrane. It catalyses the reaction a lipid A + a 1,2-diacyl-sn-glycero-3-phosphocholine = a hepta-acyl lipid A + a 2-acyl-sn-glycero-3-phosphocholine. It carries out the reaction a lipid IVA + a 1,2-diacyl-sn-glycero-3-phosphocholine = a lipid IVB + a 2-acyl-sn-glycero-3-phosphocholine. The enzyme catalyses a lipid IIA + a 1,2-diacyl-sn-glycero-3-phosphocholine = a lipid IIB + a 2-acyl-sn-glycero-3-phosphocholine. Its function is as follows. Transfers a fatty acid residue from the sn-1 position of a phospholipid to the N-linked hydroxyfatty acid chain on the proximal unit of lipid A or its precursors. This chain is Lipid A acyltransferase PagP, found in Methylobacillus flagellatus (strain ATCC 51484 / DSM 6875 / VKM B-1610 / KT).